A 638-amino-acid polypeptide reads, in one-letter code: Cytoplasmic dynein 1 intermediate chain 2 (638 aa).

Basic and acidic residues-rich tracts occupy residues 1–13 (MSDK…ELER) and 20–43 (QIRE…KKEA). Disordered stretches follow at residues 1 to 135 (MSDK…GRGP) and 155 to 214 (TYTK…EEKQ). Ser-2 carries the post-translational modification N-acetylserine. Ser-51 carries the diphosphoserine modification. Phosphoserine is present on residues Ser-51, Ser-73, Trp-81, Pro-84, and Ser-90. A compositionally biased stretch (low complexity) spans 88-97 (PSSKSVSTPS). The residue at position 95 (Thr-95) is a Phosphothreonine. Residues Ser-97, Ser-101, and Ser-104 each carry the phosphoserine modification. Residues 190-214 (EKTLKKDEENDSKAPPHELTEEEKQ) show a composition bias toward basic and acidic residues. WD repeat units follow at residues 277–326 (SKHR…TTPE), 330–370 (HCQS…RTPV), 379–420 (AHTH…HPQD), 429–469 (SKAV…AGIS), 474–519 (GHQG…PLYS), 522–562 (DNAD…EVPT), and 568–607 (EGNP…AVPR).

This sequence belongs to the dynein intermediate chain family. Homodimer. The cytoplasmic dynein 1 complex consists of two catalytic heavy chains (HCs) and a number of non-catalytic subunits presented by intermediate chains (ICs), light intermediate chains (LICs) and light chains (LCs); the composition seems to vary in respect to the IC, LIC and LC composition. The heavy chain homodimer serves as a scaffold for the probable homodimeric assembly of the respective non-catalytic subunits. The ICs and LICs bind directly to the HC dimer and the LCs assemble on the IC dimer. Interacts with DYNLT3. Interacts with DYNLT1. Interacts (dephosphorylated at Ser-90) with DCTN1. Interacts with BICD2. Interacts with SPEF2. Interacts with CFAP61. As to quaternary structure, (Microbial infection) Interacts with human adenovirus 5 hexon protein; this interaction probably allows virus intracellular transport. The phosphorylation status of Ser-90 appears to be involved in dynactin-dependent target binding. In terms of processing, pyrophosphorylation by 5-diphosphoinositol pentakisphosphate (5-IP7) promotes interaction with DCTN1. Serine pyrophosphorylation is achieved by Mg(2+)-dependent, but enzyme independent transfer of a beta-phosphate from a inositol pyrophosphate to a pre-phosphorylated serine residue.

It localises to the cytoplasm. The protein resides in the cytoskeleton. Functionally, acts as one of several non-catalytic accessory components of the cytoplasmic dynein 1 complex that are thought to be involved in linking dynein to cargos and to adapter proteins that regulate dynein function. Cytoplasmic dynein 1 acts as a motor for the intracellular retrograde motility of vesicles and organelles along microtubules. The intermediate chains mediate the binding of dynein to dynactin via its 150 kDa component (p150-glued) DCTN1. Involved in membrane-transport, such as Golgi apparatus, late endosomes and lysosomes. This is Cytoplasmic dynein 1 intermediate chain 2 from Homo sapiens (Human).